A 332-amino-acid polypeptide reads, in one-letter code: DNA packaging protein (332 aa).

An ATPase region spans residues 1-207 (MDKSLFYNPQ…SERRKTRFGR (207 aa)). An ATP-binding site is contributed by 24–31 (GARGIGKS). The DNA-binding stretch occupies residues 233-332 (KRSKDSKFVF…YELFRKMRIQ (100 aa)).

Belongs to the phi29likevirus gp16 family. As to quaternary structure, homopentamer. Interacts with the packaging RNA (pRNA). Part of a DNA-gp3-gp16 complex.

The enzyme catalyses ATP + H2O = ADP + phosphate + H(+). Functionally, ATPase required for the genome encapsidation reaction. Part of the active packaging motor via the binding to the packaging RNA (pRNA), itself fixed to the head-tail connector at the unique portal vertex of the prohead. Binds and supercoils the pre-formed, unit-length DNA bound to gp3 to produce an initiation complex for DNA packaging. Provides the energy to actively pump the viral DNA into the prohead. Approximately one molecule of ATP is used in the packaging of 2 bp of viral DNA. ATP hydrolysis results in a conformational change that causes the arginine/lysine finger of one subunit to move into the active site of its neighbor, where it interacts with the negatively charged oxygens on the gamma-phosphate of ATP. After packaging, the ATPase and the pRNA are released from the prohead. The sequence is that of DNA packaging protein (16) from Bacillus phage phi29 (Bacteriophage phi-29).